We begin with the raw amino-acid sequence, 347 residues long: Peroxidase C2 (347 aa).

An N-terminal signal peptide occupies residues 1-24 (MHSSSSLIKLGFLLLLLNVSLSHA). 4 cysteine pairs are disulfide-bonded: cysteine 35–cysteine 115, cysteine 68–cysteine 73, cysteine 121–cysteine 325, and cysteine 201–cysteine 233. The Proton acceptor role is filled by histidine 66. Ca(2+) is bound by residues aspartate 67, valine 70, glycine 72, aspartate 74, and serine 76. Residue asparagine 81 is glycosylated (N-linked (GlcNAc...) asparagine). Proline 163 is a substrate binding site. Histidine 194 contacts heme b. A Ca(2+)-binding site is contributed by threonine 195. N-linked (GlcNAc...) asparagine glycosylation is found at asparagine 210 and asparagine 238. The Ca(2+) site is built by aspartate 246, threonine 249, and aspartate 254.

It belongs to the peroxidase family. Classical plant (class III) peroxidase subfamily. The cofactor is Ca(2+). Requires heme b as cofactor.

It is found in the secreted. It localises to the vacuole. The catalysed reaction is 2 a phenolic donor + H2O2 = 2 a phenolic radical donor + 2 H2O. In terms of biological role, removal of H(2)O(2), oxidation of toxic reductants, biosynthesis and degradation of lignin, suberization, auxin catabolism, response to environmental stresses such as wounding, pathogen attack and oxidative stress. These functions might be dependent on each isozyme/isoform in each plant tissue. The chain is Peroxidase C2 (PRXC2) from Armoracia rusticana (Horseradish).